A 749-amino-acid polypeptide reads, in one-letter code: Phosphate-regulating neutral endopeptidase PHEX (749 aa).

Residues methionine 1–arginine 20 lie on the Cytoplasmic side of the membrane. The helical; Signal-anchor for type II membrane protein transmembrane segment at isoleucine 21–leucine 37 threads the bilayer. Topologically, residues phenylalanine 38–tryptophan 749 are extracellular. Positions tyrosine 53–tryptophan 749 constitute a Peptidase M13 domain. Residues cysteine 54 and cysteine 59 are joined by a disulfide bond. Asparagine 71, asparagine 238, asparagine 263, asparagine 290, asparagine 301, asparagine 377, and asparagine 484 each carry an N-linked (GlcNAc...) asparagine glycan. Disulfide bonds link cysteine 77–cysteine 733, cysteine 85–cysteine 693, cysteine 142–cysteine 406, and cysteine 617–cysteine 746. Histidine 580 lines the Zn(2+) pocket. Glutamate 581 is an active-site residue. Histidine 584 and glutamate 642 together coordinate Zn(2+). Aspartate 646 serves as the catalytic Proton donor. Asparagine 736 is a glycosylation site (N-linked (GlcNAc...) asparagine).

It belongs to the peptidase M13 family. In terms of assembly, interacts with MEPE; the interaction is zinc-dependent (via ASARM motif). It depends on Zn(2+) as a cofactor. Post-translationally, N-glycosylated. As to expression, expressed in bone, specifically in the osteoid and in osteocytes. Expressed in teeth, specifically in odontoblasts and ameloblasts. Expressed moderately by macrophages in the liver and has minimal expression in brown adipose tissue. Also expressed in suprabasal layers of the skin.

The protein resides in the cell membrane. Its function is as follows. Peptidase that cleaves SIBLING (small integrin-binding ligand, N-linked glycoprotein)-derived ASARM peptides, thus regulating their biological activity. Cleaves ASARM peptides between Ser and Glu or Asp residues. Regulates osteogenic cell differentiation and bone mineralization through the cleavage of the MEPE-derived ASARM peptide. Promotes dentin mineralization and renal phosphate reabsorption by cleaving DMP1- and MEPE-derived ASARM peptides. Inhibits the cleavage of MEPE by CTSB/cathepsin B thus preventing MEPE degradation. The chain is Phosphate-regulating neutral endopeptidase PHEX (Phex) from Mus musculus (Mouse).